The primary structure comprises 490 residues: Argininosuccinate lyase (490 aa).

This sequence belongs to the lyase 1 family. Argininosuccinate lyase subfamily.

It is found in the cytoplasm. The catalysed reaction is 2-(N(omega)-L-arginino)succinate = fumarate + L-arginine. Its pathway is amino-acid biosynthesis; L-arginine biosynthesis; L-arginine from L-ornithine and carbamoyl phosphate: step 3/3. The sequence is that of Argininosuccinate lyase from Bifidobacterium longum subsp. infantis (strain ATCC 15697 / DSM 20088 / JCM 1222 / NCTC 11817 / S12).